A 171-amino-acid chain; its full sequence is Lipoprotein signal peptidase (171 aa).

3 helical membrane-spanning segments follow: residues 7–27 (GLLALVLTLILDQATKLGLYF), 64–84 (IGRWLLVALSLAAAIGLGLWM), and 88–108 (TSRLLGIALGLIVGGALGNAI). Active-site residues include D118 and D136. A helical transmembrane segment spans residues 128–148 (SWYVFNVADAAIVAGVIGLIL).

Belongs to the peptidase A8 family.

It is found in the cell inner membrane. The catalysed reaction is Release of signal peptides from bacterial membrane prolipoproteins. Hydrolyzes -Xaa-Yaa-Zaa-|-(S,diacylglyceryl)Cys-, in which Xaa is hydrophobic (preferably Leu), and Yaa (Ala or Ser) and Zaa (Gly or Ala) have small, neutral side chains.. It participates in protein modification; lipoprotein biosynthesis (signal peptide cleavage). This protein specifically catalyzes the removal of signal peptides from prolipoproteins. This chain is Lipoprotein signal peptidase, found in Methylobacterium radiotolerans (strain ATCC 27329 / DSM 1819 / JCM 2831 / NBRC 15690 / NCIMB 10815 / 0-1).